A 901-amino-acid chain; its full sequence is Schlafen family member 11 (901 aa).

Residues Glu209 and Glu214 each coordinate Mg(2+). Residue Lys216 is part of the active site. The Zn(2+) site is built by His285, Cys287, Cys321, and Cys322. 599–606 (GLPGSGKT) contributes to the ATP binding site.

It belongs to the Schlafen family. Subgroup III subfamily. In terms of assembly, homodimer. Interacts with MCM3. Interacts with DHX9. Interacts with RPA1. Mg(2+) is required as a cofactor. In terms of tissue distribution, exhibits a wider expression range in ovarian and colon adenocarcinoma than in their corresponding healthy tissues.

Its subcellular location is the nucleus. The protein localises to the chromosome. Inhibitor of DNA replication that promotes cell death in response to DNA damage. Acts as a guardian of the genome by killing cells with defective replication. Persistently blocks stressed replication forks by opening chromatin across replication initiation sites at stressed replication forks, possibly leading to unwind DNA ahead of the MCM helicase and block fork progression, ultimately leading to cell death. Upon DNA damage, inhibits translation of ATR or ATM based on distinct codon usage without disrupting early DNA damage response signaling. Antiviral restriction factor with manganese-dependent type II tRNA endoribonuclease. A single tRNA molecule is bound and cleaved by the SLFN11 dimer. Specifically abrogates the production of retroviruses such as human immunodeficiency virus 1 (HIV-1) by acting as a specific inhibitor of the synthesis of retroviruses encoded proteins in a codon-usage-dependent manner. Impairs the replication of human cytomegalovirus (HCMV) and some Flaviviruses. Exploits the unique viral codon bias towards A/T nucleotides. Also acts as an interferon (IFN)-induced antiviral protein which acts as an inhibitor of retrovirus protein synthesis. The polypeptide is Schlafen family member 11 (Homo sapiens (Human)).